Reading from the N-terminus, the 99-residue chain is UPF0122 protein UU142 (99 aa).

It belongs to the UPF0122 family.

In terms of biological role, might take part in the signal recognition particle (SRP) pathway. This is inferred from the conservation of its genetic proximity to ftsY/ffh. May be a regulatory protein. This is UPF0122 protein UU142 from Ureaplasma parvum serovar 3 (strain ATCC 700970).